Consider the following 134-residue polypeptide: Holo-[acyl-carrier-protein] synthase (134 aa).

Residues Asp-8 and Glu-57 each contribute to the Mg(2+) site.

It belongs to the P-Pant transferase superfamily. AcpS family. Mg(2+) serves as cofactor.

The protein localises to the cytoplasm. It carries out the reaction apo-[ACP] + CoA = holo-[ACP] + adenosine 3',5'-bisphosphate + H(+). Its function is as follows. Transfers the 4'-phosphopantetheine moiety from coenzyme A to a Ser of acyl-carrier-protein. The protein is Holo-[acyl-carrier-protein] synthase of Rhizobium etli (strain ATCC 51251 / DSM 11541 / JCM 21823 / NBRC 15573 / CFN 42).